The sequence spans 112 residues: UPF0060 membrane protein AAur_4166 (112 aa).

The next 4 membrane-spanning stretches (helical) occupy residues 8–28 (ILFV…WQAV), 33–53 (AWWW…FAAF), 62–82 (VLAA…MLMD), and 91–111 (VIGA…PRPG).

It belongs to the UPF0060 family.

The protein localises to the cell membrane. This chain is UPF0060 membrane protein AAur_4166, found in Paenarthrobacter aurescens (strain TC1).